The following is a 583-amino-acid chain: Bifunctional lycopene cyclase/phytoene synthase (583 aa).

The lycopene beta-cyclase stretch occupies residues 1 to 243 (MGFDYALVHL…IVFGQLAFDN (243 aa)). The next 7 helical transmembrane spans lie at 3 to 23 (FDYA…LTWL), 35 to 55 (KVGY…SYLI), 75 to 97 (IPLE…YLLL), 120 to 140 (YMRL…WRCI), 151 to 171 (LILV…YQFI), 173 to 193 (ALPV…LWVV), and 221 to 241 (IEEA…QLAF). The segment at 250–583 (TFPHLFTGPS…MVAWRTLNSK (334 aa)) is phytoene synthase.

The protein in the N-terminal section; belongs to the lycopene beta-cyclase family. It in the C-terminal section; belongs to the phytoene/squalene synthase family.

It localises to the membrane. The catalysed reaction is all-trans-lycopene = gamma-carotene. It carries out the reaction gamma-carotene = all-trans-beta-carotene. The enzyme catalyses 2 (2E,6E,10E)-geranylgeranyl diphosphate = 15-cis-phytoene + 2 diphosphate. Its pathway is carotenoid biosynthesis; beta-carotene biosynthesis. The protein operates within carotenoid biosynthesis; phytoene biosynthesis; all-trans-phytoene from geranylgeranyl diphosphate: step 1/1. In terms of biological role, bifunctional enzyme that catalyzes the reactions from geranylgeranyl diphosphate to phytoene (phytoene synthase) and lycopene to beta-carotene via the intermediate gamma-carotene (lycopene cyclase). The protein is Bifunctional lycopene cyclase/phytoene synthase of Pyrenophora tritici-repentis (strain Pt-1C-BFP) (Wheat tan spot fungus).